Consider the following 153-residue polypeptide: Xanthine-guanine phosphoribosyltransferase (153 aa).

5-phospho-alpha-D-ribose 1-diphosphate contacts are provided by residues 37–38 (RG), Arg69, and 88–96 (DDLVDTGGT). Residue Arg69 participates in GMP binding. Asp89 provides a ligand contact to Mg(2+). The guanine site is built by Asp92 and Ile135. Asp92 and Ile135 together coordinate xanthine. GMP is bound by residues 92-96 (DTGGT) and 134-135 (WI).

Belongs to the purine/pyrimidine phosphoribosyltransferase family. XGPT subfamily. In terms of assembly, homotetramer. Requires Mg(2+) as cofactor.

The protein resides in the cell membrane. It carries out the reaction GMP + diphosphate = guanine + 5-phospho-alpha-D-ribose 1-diphosphate. It catalyses the reaction XMP + diphosphate = xanthine + 5-phospho-alpha-D-ribose 1-diphosphate. The catalysed reaction is IMP + diphosphate = hypoxanthine + 5-phospho-alpha-D-ribose 1-diphosphate. It participates in purine metabolism; GMP biosynthesis via salvage pathway; GMP from guanine: step 1/1. Its pathway is purine metabolism; XMP biosynthesis via salvage pathway; XMP from xanthine: step 1/1. In terms of biological role, purine salvage pathway enzyme that catalyzes the transfer of the ribosyl-5-phosphate group from 5-phospho-alpha-D-ribose 1-diphosphate (PRPP) to the N9 position of the 6-oxopurines guanine and xanthine to form the corresponding ribonucleotides GMP (guanosine 5'-monophosphate) and XMP (xanthosine 5'-monophosphate), with the release of PPi. To a lesser extent, also acts on hypoxanthine. This Buchnera aphidicola subsp. Baizongia pistaciae (strain Bp) protein is Xanthine-guanine phosphoribosyltransferase.